Consider the following 641-residue polypeptide: Probable licABCH operon regulator (641 aa).

2 PRD domains span residues 184–289 (ILPK…TQSQ) and 296–403 (SIEE…KKTE). 4 positions are modified to phosphohistidine; by HPr: H219, H278, H333, and H392. Residues 407–498 (KRCIIVCASG…ILSDEKEKAN (92 aa)) enclose the PTS EIIB type-2 domain. A Phosphocysteine; by EIIA modification is found at C413. A PTS EIIA type-2 domain is found at 499 to 638 (RYLKKELVFF…QELSDVFDQK (140 aa)). Position 559 is a phosphohistidine; by EIIB (H559).

The protein belongs to the transcriptional antiterminator BglG family.

The regulatory activity of LicR is modulated by phosphorylation and dephosphorylation of the various LicR domains. It becomes activated via phosphoryl group transfer from PEP, EI and HPr on the two conserved histidine residues in the PRD 2 domain, whereas phosphorylation of the EIIA-like domain on His-559 by the PTS EIIB component LicB inactivates LicR. Its function is as follows. Positive regulator of the licABCH operon. The sequence is that of Probable licABCH operon regulator (licR) from Bacillus subtilis (strain 168).